Consider the following 485-residue polypeptide: Ribosomal protein S6 kinase beta-2 (485 aa).

Residues 1 to 26 are disordered; it reads MAAVFDLDLETEEGSEGEGEPEFSPA. Residues 7–21 show a composition bias toward acidic residues; the sequence is LDLETEEGSEGEGEP. The residue at position 15 (Ser15) is a Phosphoserine. Residues 67 to 328 enclose the Protein kinase domain; the sequence is FELLSVLGKG…AADVQRHPFF (262 aa). ATP contacts are provided by residues 73–81 and Lys99; that span reads LGKGGYGKV. Asp194 (proton acceptor) is an active-site residue. Positions 329 to 399 constitute an AGC-kinase C-terminal domain; the sequence is RHINWDDLLA…VAPSVLDSIK (71 aa). The segment at 407 to 485 is disordered; that stretch reads KLRSPRRLNS…SKKGRGRSGR (79 aa). Phosphoserine is present on Ser417. The residue at position 420 (Thr420) is a Phosphothreonine. Ser423 is subject to Phosphoserine. Over residues 436–469 the composition is skewed to pro residues; it reads SPGPPEPMEPSLPPLLPSPPSPPPTSTAPLPIRP. Positions 474-480 match the Nuclear localization signal motif; it reads KKSKKGR. Positions 474–485 are enriched in basic residues; sequence KKSKKGRGRSGR. Ser476 bears the Phosphoserine; by PKC mark.

This sequence belongs to the protein kinase superfamily. AGC Ser/Thr protein kinase family. S6 kinase subfamily. Phosphorylated and activated by MTOR. Phosphorylation by PKC within the NLS in response to mitogenic stimuli causes cytoplasmic retention.

The protein resides in the cytoplasm. It is found in the nucleus. It catalyses the reaction L-seryl-[protein] + ATP = O-phospho-L-seryl-[protein] + ADP + H(+). The catalysed reaction is L-threonyl-[protein] + ATP = O-phospho-L-threonyl-[protein] + ADP + H(+). Its function is as follows. Phosphorylates specifically ribosomal protein S6. Seems to act downstream of mTOR signaling in response to growth factors and nutrients to promote cell proliferation, cell growth and cell cycle progression in an alternative pathway regulated by MEAK7. This is Ribosomal protein S6 kinase beta-2 (Rps6kb2) from Mus musculus (Mouse).